A 242-amino-acid polypeptide reads, in one-letter code: tRNA (guanine-N(1)-)-methyltransferase (242 aa).

S-adenosyl-L-methionine-binding positions include G115 and 134 to 139; that span reads LGDFVL. The span at 210–224 shows a compositional bias: basic and acidic residues; sequence QEQREQRTAARRPDL. The disordered stretch occupies residues 210–242; the sequence is QEQREQRTAARRPDLMQRWQQRFGADNDSEHRA.

Belongs to the RNA methyltransferase TrmD family. As to quaternary structure, homodimer.

It localises to the cytoplasm. The catalysed reaction is guanosine(37) in tRNA + S-adenosyl-L-methionine = N(1)-methylguanosine(37) in tRNA + S-adenosyl-L-homocysteine + H(+). Functionally, specifically methylates guanosine-37 in various tRNAs. The protein is tRNA (guanine-N(1)-)-methyltransferase of Synechococcus sp. (strain WH7803).